The primary structure comprises 185 residues: Gastrokine-1 (185 aa).

A signal peptide spans 1-20; that stretch reads MKFTIAFAGLLGVFLTPALA. A BRICHOS domain is found at 54-150; the sequence is NNGWNSWNAL…MCKGIPTYMA (97 aa). Cysteines 81 and 142 form a disulfide.

The protein belongs to the gastrokine family. In terms of tissue distribution, highly expressed specifically in surface cells of the antrum mucosa from where it is secreted.

It localises to the secreted. Its subcellular location is the cytoplasmic granule. It is found in the golgi apparatus. Its function is as follows. Has mitogenic activity and may be involved in maintaining the integrity of the gastric mucosal epithelium. The protein is Gastrokine-1 (GKN1) of Sus scrofa (Pig).